Reading from the N-terminus, the 168-residue chain is Photosystem I assembly protein Ycf3 (168 aa).

3 TPR repeats span residues 35–68, 72–105, and 120–153; these read AFAYYINGMSAQSEGNYAEALQNYYQAMHLEMDP, SYILYNIGIIHTSNGEHSKALEYYCRAIERNPFL, and GEQAIQQGDSEIAEAWFDQAAEYWKQARTLTPGN.

This sequence belongs to the Ycf3 family.

The protein localises to the plastid membrane. Essential for the assembly of the photosystem I (PSI) complex. May act as a chaperone-like factor to guide the assembly of the PSI subunits. The polypeptide is Photosystem I assembly protein Ycf3 (Cuscuta gronovii (Common dodder)).